Consider the following 309-residue polypeptide: Aspartate carbamoyltransferase catalytic subunit (309 aa).

2 residues coordinate carbamoyl phosphate: R54 and T55. K82 is an L-aspartate binding site. Residues R104, H132, and Q135 each contribute to the carbamoyl phosphate site. L-aspartate is bound by residues R165 and R219. The carbamoyl phosphate site is built by G260 and P261.

This sequence belongs to the aspartate/ornithine carbamoyltransferase superfamily. ATCase family. Heterododecamer (2C3:3R2) of six catalytic PyrB chains organized as two trimers (C3), and six regulatory PyrI chains organized as three dimers (R2).

It carries out the reaction carbamoyl phosphate + L-aspartate = N-carbamoyl-L-aspartate + phosphate + H(+). It participates in pyrimidine metabolism; UMP biosynthesis via de novo pathway; (S)-dihydroorotate from bicarbonate: step 2/3. Functionally, catalyzes the condensation of carbamoyl phosphate and aspartate to form carbamoyl aspartate and inorganic phosphate, the committed step in the de novo pyrimidine nucleotide biosynthesis pathway. This chain is Aspartate carbamoyltransferase catalytic subunit, found in Parafrankia sp. (strain EAN1pec).